Here is a 225-residue protein sequence, read N- to C-terminus: uncharacterized protein (225 aa).

Positions 114 to 219 (DAEAIIMQVY…RLSVTMRRII (106 aa)) constitute a Fe2OG dioxygenase domain.

It belongs to the iron/ascorbate-dependent oxidoreductase family.

The protein resides in the cytoplasm. The protein localises to the nucleus. This is an uncharacterized protein from Schizosaccharomyces pombe (strain 972 / ATCC 24843) (Fission yeast).